The chain runs to 463 residues: Glycine--tRNA ligase (463 aa).

Residue R102 coordinates substrate. Residues K113 to G134 form a disordered region. E165 serves as a coordination point for substrate. ATP contacts are provided by residues R197–E199, F207–F212, E284–L285, and G328–R331. Substrate is bound at residue F212 to E216. E324–G328 serves as a coordination point for substrate.

Belongs to the class-II aminoacyl-tRNA synthetase family. In terms of assembly, homodimer.

It is found in the cytoplasm. The enzyme catalyses tRNA(Gly) + glycine + ATP = glycyl-tRNA(Gly) + AMP + diphosphate. In terms of biological role, catalyzes the attachment of glycine to tRNA(Gly). This is Glycine--tRNA ligase from Mycolicibacterium paratuberculosis (strain ATCC BAA-968 / K-10) (Mycobacterium paratuberculosis).